A 322-amino-acid chain; its full sequence is Mitochondrial glutamate carrier 1 (322 aa).

3 Solcar repeats span residues 6–93 (ISLP…FRYQ), 101–214 (LTLF…LNEL), and 223–312 (SPFY…GIAE). Helical transmembrane passes span 12-32 (LINGGIAGLIGVTCVFPIDLA), 62-82 (YFGMYRGAAVNLTLVTPEKAI), 107-127 (MLAGCGAGTCQVIVTTPMEML), 189-209 (GLGATLLRDVPFSIVYFPLFA), 223-243 (SPFYVSFLAGCVAGSAAAVAV), and 292-312 (ALVIAPLFGIAQVVYFLGIAE).

This sequence belongs to the mitochondrial carrier (TC 2.A.29) family.

Its subcellular location is the mitochondrion inner membrane. The enzyme catalyses L-glutamate(in) + H(+)(in) = L-glutamate(out) + H(+)(out). Functionally, mitochondrial glutamate/H(+) symporter. Responsible for the transport of glutamate from the cytosol into the mitochondrial matrix with the concomitant import of a proton. Plays a role in the control of glucose-stimulated insulin secretion. This is Mitochondrial glutamate carrier 1 (SLC25A22) from Bos taurus (Bovine).